Consider the following 393-residue polypeptide: Iripin-5 (393 aa).

An N-terminal signal peptide occupies residues 1–16 (MKTLIVLMCSLVVVWA). Asn-198 and Asn-245 each carry an N-linked (GlcNAc...) asparagine glycan.

The protein belongs to the serpin family. Highly expressed in female salivary gland during blood feeding. Expressed in female midgut and ovary during blood feeding.

The protein localises to the secreted. In terms of biological role, serine protease inhibitor that modulates blood feeding of ticks on vertebrate species. Inhibits host neutrophil elastase (ELANE) and proteinase 3/myeloblastin (PRTN3). Moderately inhibits host chymase, cathepsin G (CTSG), trypsin and alpha-chymotrypsin. Decreases host neutrophil migration. Decreases nitric oxide production by host macrophages. Decreases host complement activity. The protein is Iripin-5 of Ixodes ricinus (Common tick).